Here is a 278-residue protein sequence, read N- to C-terminus: Manganese import system permease protein ScaB (278 aa).

8 consecutive transmembrane segments (helical) span residues 18-38 (ALIT…FIIL), 61-81 (ILGI…SIII), 94-114 (TAIG…ISVA), 134-154 (LDMW…SIFF), 174-194 (VNFY…TAMQ), 196-216 (VGTI…YLYA), 222-242 (MILL…FIGY), and 246-266 (VAAG…SFFI).

It belongs to the ABC-3 integral membrane protein family. In terms of assembly, the complex is composed of two ATP-binding proteins (ScaC), two transmembrane proteins (ScaB) and a solute-binding protein (ScaA).

The protein localises to the cell membrane. Its function is as follows. Part of the high-affinity ABC transporter complex ScaABC involved in manganese import. Probably responsible for the translocation of the substrate across the membrane. Essential for growth under Mn(2+)-limiting conditions. In Streptococcus gordonii, this protein is Manganese import system permease protein ScaB.